The chain runs to 253 residues: uncharacterized protein (253 aa).

Ser-145 contributes to the substrate binding site. The active-site Proton acceptor is the Tyr-159.

The protein belongs to the short-chain dehydrogenases/reductases (SDR) family.

This is an uncharacterized protein from Mycobacterium tuberculosis (strain CDC 1551 / Oshkosh).